A 322-amino-acid polypeptide reads, in one-letter code: tRNA dimethylallyltransferase (322 aa).

Residue Gly-21–Thr-28 coordinates ATP. A substrate-binding site is contributed by Thr-23–Thr-28. An interaction with substrate tRNA region spans residues Asp-46–Cys-49.

It belongs to the IPP transferase family. Monomer. Mg(2+) serves as cofactor.

The enzyme catalyses adenosine(37) in tRNA + dimethylallyl diphosphate = N(6)-dimethylallyladenosine(37) in tRNA + diphosphate. Functionally, catalyzes the transfer of a dimethylallyl group onto the adenine at position 37 in tRNAs that read codons beginning with uridine, leading to the formation of N6-(dimethylallyl)adenosine (i(6)A). The sequence is that of tRNA dimethylallyltransferase from Wigglesworthia glossinidia brevipalpis.